The following is a 194-amino-acid chain: ATP-dependent Clp protease proteolytic subunit (194 aa).

S97 serves as the catalytic Nucleophile. H122 is a catalytic residue.

This sequence belongs to the peptidase S14 family. In terms of assembly, fourteen ClpP subunits assemble into 2 heptameric rings which stack back to back to give a disk-like structure with a central cavity, resembling the structure of eukaryotic proteasomes.

It localises to the cytoplasm. The enzyme catalyses Hydrolysis of proteins to small peptides in the presence of ATP and magnesium. alpha-casein is the usual test substrate. In the absence of ATP, only oligopeptides shorter than five residues are hydrolyzed (such as succinyl-Leu-Tyr-|-NHMec, and Leu-Tyr-Leu-|-Tyr-Trp, in which cleavage of the -Tyr-|-Leu- and -Tyr-|-Trp bonds also occurs).. Cleaves peptides in various proteins in a process that requires ATP hydrolysis. Has a chymotrypsin-like activity. Plays a major role in the degradation of misfolded proteins. The protein is ATP-dependent Clp protease proteolytic subunit of Carsonella ruddii (strain PV).